Consider the following 354-residue polypeptide: Glycine betaine/proline betaine transport system permease protein ProW (354 aa).

Residues 1–28 are disordered; sequence MADQTNPWDTAQVADTTTQTADAWGTPA. Topologically, residues 1–99 are cytoplasmic; that stretch reads MADQTNPWDT…VDYILNGFQQ (99 aa). A compositionally biased stretch (low complexity) spans 9-23; sequence DTAQVADTTTQTADA. Residues 100–120 traverse the membrane as a helical segment; it reads LLLGMPAPVAIILFALIAWQV. Serine 121 is a topological domain (periplasmic). Residues 122–142 form a helical membrane-spanning segment; that stretch reads GVGMGIATLISLIAIGAIGAW. The Cytoplasmic segment spans residues 143–148; it reads SQAMIT. The ABC transmembrane type-1 domain maps to 145–324; that stretch reads AMITLALVLT…ILAIILDRLT (180 aa). A helical transmembrane segment spans residues 149–169; the sequence is LALVLTALLFCVVIGLPMGIW. The Periplasmic portion of the chain corresponds to 170–198; it reads LARSPRAAKIVRPLLDAMQTTPAFVYLVP. Residues 199–219 traverse the membrane as a helical segment; the sequence is IVMLFGIGNVPGVVVTIIFAL. Over 220 to 270 the chain is Cytoplasmic; it reads PPIVRLTILGINQVPADLIEASRSFGASPRQMLFKVQLPLAMPTIMAGVNQ. Residues 271 to 291 traverse the membrane as a helical segment; it reads TLMLALSMVVIASMIAVGGLG. Residues 292–300 are Periplasmic-facing; it reads QMVLRGIGR. A helical transmembrane segment spans residues 301–321; the sequence is LDMGLATVGGVGIVILAIILD. Residues 322–354 lie on the Cytoplasmic side of the membrane; it reads RLTQAVGRDSRSRGNRRWYTTGPVGLITRPFVK.

The protein belongs to the binding-protein-dependent transport system permease family. CysTW subfamily. In terms of assembly, the complex is composed of two ATP-binding proteins (ProV), two transmembrane proteins (ProW) and a solute-binding protein (ProX).

It localises to the cell inner membrane. Functionally, part of the ProU ABC transporter complex involved in glycine betaine and proline betaine uptake. Probably responsible for the translocation of the substrate across the membrane. This chain is Glycine betaine/proline betaine transport system permease protein ProW, found in Salmonella typhimurium (strain LT2 / SGSC1412 / ATCC 700720).